The primary structure comprises 542 residues: uncharacterized protein (542 aa).

The next 5 helical transmembrane spans lie at 4–23 (ILRD…GYPL), 28–47 (IGGI…AFGA), 57–79 (IVYQ…HGFL), 86–108 (GVIY…LIPH), and 151–173 (PVVG…IYLA). 2 RCK C-terminal domains span residues 186 to 270 (RTLK…VIGC) and 273 to 356 (EVQA…LGDS). 6 consecutive transmembrane segments (helical) span residues 365–384 (IAVL…VPIP), 389–408 (ITVR…FLGA), 415–437 (LVWV…IFLA), 457–479 (WAIL…YVGY), 484–506 (IPMG…LGFA), and 519–541 (YAMV…IAVL).

It belongs to the AAE transporter (TC 2.A.81) family.

It is found in the cell membrane. This is an uncharacterized protein from Symbiobacterium thermophilum (strain DSM 24528 / JCM 14929 / IAM 14863 / T).